The following is a 199-amino-acid chain: NAD(P)H dehydrogenase (quinone) (199 aa).

Residues 4–190 (VLVLYYSMYG…AIARFQGKHV (187 aa)) enclose the Flavodoxin-like domain. Residues 10–15 (SMYGHI) and 79–81 (TRF) each bind FMN. Y12 is a binding site for NAD(+). W99 serves as a coordination point for substrate. Residues 114-119 (STGTGG) and H134 each bind FMN.

It belongs to the WrbA family. Requires FMN as cofactor.

The catalysed reaction is a quinone + NADH + H(+) = a quinol + NAD(+). It catalyses the reaction a quinone + NADPH + H(+) = a quinol + NADP(+). This is NAD(P)H dehydrogenase (quinone) from Marinobacter nauticus (strain ATCC 700491 / DSM 11845 / VT8) (Marinobacter aquaeolei).